The sequence spans 493 residues: Glutamate--tRNA ligase (493 aa).

The 'HIGH' region signature appears at 10 to 20; sequence PSPTGTPHVGL. The short motif at 254–258 is the 'KMSKS' region element; the sequence is KLSKR. Residue lysine 257 coordinates ATP.

It belongs to the class-I aminoacyl-tRNA synthetase family. Glutamate--tRNA ligase type 1 subfamily. In terms of assembly, monomer.

The protein localises to the cytoplasm. The catalysed reaction is tRNA(Glu) + L-glutamate + ATP = L-glutamyl-tRNA(Glu) + AMP + diphosphate. Its function is as follows. Catalyzes the attachment of glutamate to tRNA(Glu) in a two-step reaction: glutamate is first activated by ATP to form Glu-AMP and then transferred to the acceptor end of tRNA(Glu). In Corynebacterium efficiens (strain DSM 44549 / YS-314 / AJ 12310 / JCM 11189 / NBRC 100395), this protein is Glutamate--tRNA ligase.